Here is a 604-residue protein sequence, read N- to C-terminus: Prostaglandin G/H synthase 2 (604 aa).

The first 17 residues, 1-17 (MLARALLLCAVLALSHT), serve as a signal peptide directing secretion. The region spanning 18-55 (ANPCCSHPCQNRGVCMSVGFDQYKCDCTRTGFYGENCS) is the EGF-like domain. Intrachain disulfides connect Cys-21/Cys-32, Cys-22/Cys-145, Cys-26/Cys-42, and Cys-44/Cys-54. Residue Asn-53 is glycosylated (N-linked (GlcNAc...) asparagine). Arg-106 is a substrate binding site. Asn-130 carries an N-linked (GlcNAc...) asparagine glycan. The active-site Proton acceptor is His-193. Tyr-341 contributes to the substrate binding site. Tyr-371 functions as the For cyclooxygenase activity in the catalytic mechanism. Residue His-374 coordinates heme b. A glycan (N-linked (GlcNAc...) asparagine) is linked at Asn-396. At Cys-526 the chain carries S-nitrosocysteine. Cys-555 and Cys-561 are oxidised to a cystine. Position 565 is an O-acetylserine (Ser-565). Asn-580 carries N-linked (GlcNAc...) asparagine glycosylation.

It belongs to the prostaglandin G/H synthase family. In terms of assembly, homodimer. It depends on heme b as a cofactor. In terms of processing, S-nitrosylation by NOS2 (iNOS) activates enzyme activity. S-nitrosylation may take place on different Cys residues in addition to Cys-526. Post-translationally, acetylated at Ser-565 by SPHK1. During neuroinflammation, acetylation by SPHK1 promotes neuronal secretion of specialized preresolving mediators (SPMs), especially 15-R-lipoxin A4, which results in an increase of phagocytic microglia.

It is found in the microsome membrane. It localises to the endoplasmic reticulum membrane. The protein localises to the nucleus inner membrane. Its subcellular location is the nucleus outer membrane. The catalysed reaction is (5Z,8Z,11Z,14Z)-eicosatetraenoate + AH2 + 2 O2 = prostaglandin H2 + A + H2O. It catalyses the reaction (5Z,8Z,11Z,14Z)-eicosatetraenoate + 2 O2 = prostaglandin G2. It carries out the reaction prostaglandin G2 + AH2 = prostaglandin H2 + A + H2O. The enzyme catalyses (5Z,8Z,11Z,14Z,17Z)-eicosapentaenoate + 2 O2 = prostaglandin G3. The catalysed reaction is prostaglandin G3 + AH2 = prostaglandin H3 + A + H2O. It catalyses the reaction (8Z,11Z,14Z)-eicosatrienoate + 2 O2 = prostaglandin G1. It carries out the reaction prostaglandin G1 + AH2 = prostaglandin H1 + A + H2O. The enzyme catalyses 2-(5Z,8Z,11Z,14Z)-eicosatetraenoyl-sn-glycero-3-phosphoethanolamine + 2 O2 = 2-(prostaglandin G2)-sn-glycero-3-phosphoethanolamine. The catalysed reaction is 2-(prostaglandin G2)-sn-glycero-3-phosphoethanolamine + AH2 = 2-(prostaglandin H2)-sn-glycero-3-phosphoethanolamine + A + H2O. It catalyses the reaction 2-(5Z,8Z,11Z,14Z)-eicosatetraenoyl-sn-glycero-3-phosphocholine + 2 O2 = 2-(prostaglandin G2)-sn-glycero-3-phosphocholine. It carries out the reaction 2-(prostaglandin G2)-sn-glycero-3-phosphocholine + AH2 = 2-(prostaglandin H2)-sn-glycero-3-phosphocholine + A + H2O. The enzyme catalyses (15S)-hydroperoxy-(5Z,8Z,11Z,13E)-eicosatetraenoate + AH2 = (15S)-hydroxy-(5Z,8Z,11Z,13E)-eicosatetraenoate + A + H2O. The catalysed reaction is 2-(5Z,8Z,11Z,14Z)-eicosatetraenoyl-sn-glycero-3-phosphocholine + AH2 + O2 = 2-[(15S)-hydroxy-(5Z,8Z,11Z,13E)-eicosatetraenoyl]-sn-glycero-3-phosphocholine + A + H2O. It catalyses the reaction 2-(5Z,8Z,11Z,14Z)-eicosatetraenoyl-sn-glycero-3-phosphocholine + AH2 + O2 = 2-[(15R)-hydroxy-(5Z,8Z,11Z,13E)-eicosatetraenoyl]-sn-glycero-3-phosphocholine + A + H2O. It carries out the reaction 2-(5Z,8Z,11Z,14Z)-eicosatetraenoyl-sn-glycero-3-phosphocholine + AH2 + O2 = 2-[(11R)-hydroxy-(5Z,8Z,12E,14Z)-eicosatetraenoyl]-sn-glycero-3-phosphocholine + A + H2O. The enzyme catalyses (9Z,12Z)-octadecadienoate + AH2 + O2 = 9-hydroxy-(10E,12Z)-octadecadienoate + A + H2O. The catalysed reaction is (9Z,12Z)-octadecadienoate + AH2 + O2 = 13-hydroxy-(9Z,11E)-octadecadienoate + A + H2O. It catalyses the reaction (5Z,8Z,11Z,14Z)-eicosatetraenoate + AH2 + O2 = (15R)-hydroxy-(5Z,8Z,11Z,13E)-eicosatetraenoate + A + H2O. It carries out the reaction (5Z,8Z,11Z,14Z)-eicosatetraenoate + AH2 + O2 = (11R)-hydroxy-(5Z,8Z,12E,14Z)-eicosatetraenoate + A + H2O. The enzyme catalyses (5Z,8Z,11Z,14Z,17Z)-eicosapentaenoate + AH2 + O2 = (11R)-hydroxy-(5Z,8Z,12E,14Z,17Z)-eicosapentaenoate + A + H2O. The catalysed reaction is (5Z,8Z,11Z,14Z,17Z)-eicosapentaenoate + AH2 + O2 = (18S)-hydroxy-(5Z,8Z,11Z,14Z,16E)-eicosapentaenoate + A + H2O. It catalyses the reaction (5Z,8Z,11Z,14Z,17Z)-eicosapentaenoate + AH2 + O2 = (18R)-hydroxy-(5Z,8Z,11Z,14Z,16E)-eicosapentaenoate + A + H2O. It carries out the reaction (5Z,8Z,11Z,14Z,17Z)-eicosapentaenoate + AH2 + O2 = (15R)-hydroxy-(5Z,8Z,11Z,13E,17Z)-eicosapentaenoate + A + H2O. The enzyme catalyses (5Z,8Z,11Z,14Z,17Z)-eicosapentaenoate + AH2 + O2 = (15S)-hydroxy-(5Z,8Z,11Z,13E,17Z)-eicosapentaenoate + A + H2O. The catalysed reaction is (7Z,10Z,13Z,16Z,19Z)-docosapentaenoate + AH2 + O2 = 13R-hydroxy-(7Z,10Z,14E,16Z,19Z)-docosapentaenoate + A + H2O. It catalyses the reaction (4Z,7Z,10Z,13Z,16Z,19Z)-docosahexaenoate + AH2 + O2 = 13-hydroxy-(4Z,7Z,10Z,14E,16Z,19Z)-docosahexaenoate + A + H2O. It carries out the reaction (5S)-hydroxy-(6E,8Z,11Z,14Z)-eicosatetraenoate + AH2 + O2 = (5S,15R)-dihydroxy-(6E,8Z,11Z,13E)-eicosatetraenoate + A + H2O. The enzyme catalyses (4Z,7Z,10Z,13Z,16Z,19Z)-docosahexaenoate + AH2 + O2 = 17R-hydroxy-(4Z,7Z,10Z,13Z,15E,19Z)-docosahexaenoate + A + H2O. The catalysed reaction is (5S)-hydroxy-(6E,8Z,11Z,14Z)-eicosatetraenoate + AH2 + O2 = (5S,15S)-dihydroxy-(6E,8Z,11Z,13E)-eicosatetraenoate + A + H2O. It catalyses the reaction (5S)-hydroxy-(6E,8Z,11Z,14Z)-eicosatetraenoate + AH2 + O2 = (5S,11R)-dihydroxy-(6E,8Z,12E,14Z)-eicosatetraenoate + A + H2O. It carries out the reaction 2-(5Z,8Z,11Z,14Z-eicosatetraenoyl)-glycerol + 2 O2 = 2-glyceryl-prostaglandin G2. The enzyme catalyses 2-glyceryl-prostaglandin G2 + AH2 = 2-glyceryl-prostaglandin H2 + A + H2O. The catalysed reaction is (5Z,8Z,11Z,14Z)-eicosatetraenoate + O2 = (15R)-hydroperoxy-(5Z,8Z,11Z,13E)-eicosatetraenoate. It catalyses the reaction (5Z,8Z,11Z,14Z)-eicosatetraenoate + O2 = 11R-hydroperoxy-(5Z,8Z,12E,14Z)-eicosatetraenoate. It carries out the reaction (9Z,12Z)-octadecadienoate + AH2 + O2 = (9R)-hydroxy-(10E,12Z)-octadecadienoate + A + H2O. The enzyme catalyses (9Z,12Z)-octadecadienoate + AH2 + O2 = (9S)-hydroxy-(10E,12Z)-octadecadienoate + A + H2O. The catalysed reaction is (9Z,12Z)-octadecadienoate + AH2 + O2 = (13S)-hydroxy-(9Z,11E)-octadecadienoate + A + H2O. It catalyses the reaction (9Z,12Z)-octadecadienoate + AH2 + O2 = (13R)-hydroxy-(9Z,11E)-octadecadienoate + A + H2O. It functions in the pathway lipid metabolism; prostaglandin biosynthesis. Its activity is regulated as follows. The cyclooxygenase activity is inhibited by nonsteroidal anti-inflammatory drugs (NSAIDs) including aspirin, ibuprofen, flurbiprofen, celecoxib, flufenamic, mefenamic and tolfenamic acids as well as by hydroperoxide scavenger erythrocyte glutathione peroxidase GPX1. Aspirin triggers enzyme acetylation turning off its ability to generate pro-inflammatory prostaglandins, but switches on its capacity to produce anti-inflammatory lipid mediators involved in inflammation resolution. Aspirin enhances lipoxygenase-type activity toward production of epimers with R stereochemistry such as 15R-HETE, 18R-HEPE, 15R-HEPE and 17R-HDHA. Atorvastatin, a cholesterol-lowering drug, triggers enzyme S-nitrosylation increasing production of 13-series resolvins (RvTs). Dual cyclooxygenase and peroxidase in the biosynthesis pathway of prostanoids, a class of C20 oxylipins mainly derived from arachidonate ((5Z,8Z,11Z,14Z)-eicosatetraenoate, AA, C20:4(n-6)), with a particular role in the inflammatory response. The cyclooxygenase activity oxygenates AA to the hydroperoxy endoperoxide prostaglandin G2 (PGG2), and the peroxidase activity reduces PGG2 to the hydroxy endoperoxide prostaglandin H2 (PGH2), the precursor of all 2-series prostaglandins and thromboxanes. This complex transformation is initiated by abstraction of hydrogen at carbon 13 (with S-stereochemistry), followed by insertion of molecular O2 to form the endoperoxide bridge between carbon 9 and 11 that defines prostaglandins. The insertion of a second molecule of O2 (bis-oxygenase activity) yields a hydroperoxy group in PGG2 that is then reduced to PGH2 by two electrons. Similarly catalyzes successive cyclooxygenation and peroxidation of dihomo-gamma-linoleate (DGLA, C20:3(n-6)) and eicosapentaenoate (EPA, C20:5(n-3)) to corresponding PGH1 and PGH3, the precursors of 1- and 3-series prostaglandins. In an alternative pathway of prostanoid biosynthesis, converts 2-arachidonoyl lysophopholipids to prostanoid lysophopholipids, which are then hydrolyzed by intracellular phospholipases to release free prostanoids. Metabolizes 2-arachidonoyl glycerol yielding the glyceryl ester of PGH2, a process that can contribute to pain response. Generates lipid mediators from n-3 and n-6 polyunsaturated fatty acids (PUFAs) via a lipoxygenase-type mechanism. Oxygenates PUFAs to hydroperoxy compounds and then reduces them to corresponding alcohols. Plays a role in the generation of resolution phase interaction products (resolvins) during both sterile and infectious inflammation. Metabolizes docosahexaenoate (DHA, C22:6(n-3)) to 17R-HDHA, a precursor of the D-series resolvins (RvDs). As a component of the biosynthetic pathway of E-series resolvins (RvEs), converts eicosapentaenoate (EPA, C20:5(n-3)) primarily to 18S-HEPE that is further metabolized by ALOX5 and LTA4H to generate 18S-RvE1 and 18S-RvE2. In vascular endothelial cells, converts docosapentaenoate (DPA, C22:5(n-3)) to 13R-HDPA, a precursor for 13-series resolvins (RvTs) shown to activate macrophage phagocytosis during bacterial infection. In activated leukocytes, contributes to oxygenation of hydroxyeicosatetraenoates (HETE) to diHETES (5,15-diHETE and 5,11-diHETE). Can also use linoleate (LA, (9Z,12Z)-octadecadienoate, C18:2(n-6)) as substrate and produce hydroxyoctadecadienoates (HODEs) in a regio- and stereospecific manner, being (9R)-HODE ((9R)-hydroxy-(10E,12Z)-octadecadienoate) and (13S)-HODE ((13S)-hydroxy-(9Z,11E)-octadecadienoate) its major products. During neuroinflammation, plays a role in neuronal secretion of specialized preresolving mediators (SPMs) 15R-lipoxin A4 that regulates phagocytic microglia. This is Prostaglandin G/H synthase 2 from Homo sapiens (Human).